A 129-amino-acid chain; its full sequence is Trefoil factor 2 (129 aa).

The signal sequence occupies residues 1 to 23; sequence MGRRDAQLLAALLVLGLCALAGS. P-type domains are found at residues 29-73 and 79-122; these read CQCS…FHPL and DQCV…FFPK. Intrachain disulfides connect C29-C127, C31-C58, C42-C57, C52-C69, C81-C107, C91-C106, and C101-C118.

Stomach.

The protein localises to the secreted. Its function is as follows. Inhibits gastrointestinal motility and gastric acid secretion. Could function as a structural component of gastric mucus, possibly by stabilizing glycoproteins in the mucus gel through interactions with carbohydrate side chains. This Homo sapiens (Human) protein is Trefoil factor 2 (TFF2).